A 643-amino-acid polypeptide reads, in one-letter code: uncharacterized protein (643 aa).

Positions 561–643 (LNQELETSSE…GADRKKRGVY (83 aa)) are disordered. A compositionally biased stretch (gly residues) spans 591–606 (SRGGRGGRGARGGNRG). The segment covering 617 to 635 (GHDRQMKEKHKSDIKQRGA) has biased composition (basic and acidic residues).

This is an uncharacterized protein from Caenorhabditis elegans.